Consider the following 276-residue polypeptide: Phosphonates import ATP-binding protein PhnC (276 aa).

An ABC transporter domain is found at 2-246 (LEIHNLQKSY…VLTRIYGAED (245 aa)). 35 to 42 (GPSGAGKS) is an ATP binding site.

The protein belongs to the ABC transporter superfamily. Phosphonates importer (TC 3.A.1.9.1) family. As to quaternary structure, the complex is composed of two ATP-binding proteins (PhnC), two transmembrane proteins (PhnE) and a solute-binding protein (PhnD).

The protein localises to the cell inner membrane. The enzyme catalyses phosphonate(out) + ATP + H2O = phosphonate(in) + ADP + phosphate + H(+). Functionally, part of the ABC transporter complex PhnCDE involved in phosphonates import. Responsible for energy coupling to the transport system. This is Phosphonates import ATP-binding protein PhnC from Alcaligenes faecalis.